We begin with the raw amino-acid sequence, 326 residues long: Malate dehydrogenase (326 aa).

NAD(+) is bound at residue 12–18 (GGTGQIA). The substrate site is built by Arg-93 and Arg-99. NAD(+) is bound by residues Asn-106, Gln-113, and 130–132 (VGN). Substrate is bound by residues Asn-132 and Arg-163. The Proton acceptor role is filled by His-188.

This sequence belongs to the LDH/MDH superfamily. MDH type 2 family.

The catalysed reaction is (S)-malate + NAD(+) = oxaloacetate + NADH + H(+). Functionally, catalyzes the reversible oxidation of malate to oxaloacetate. The sequence is that of Malate dehydrogenase from Chlamydia trachomatis serovar D (strain ATCC VR-885 / DSM 19411 / UW-3/Cx).